An 81-amino-acid polypeptide reads, in one-letter code: Sec-independent protein translocase protein TatA (81 aa).

A helical transmembrane segment spans residues 1–21; that stretch reads MGMPSGQELLIILAIVVLLFG. The tract at residues 45 to 81 is disordered; that stretch reads NEDDDTEVKSASTEAPKKVESAEEVASKESSKTPTQA. The span at 59 to 75 shows a compositional bias: basic and acidic residues; the sequence is APKKVESAEEVASKESS.

Belongs to the TatA/E family. In terms of assembly, the Tat system comprises two distinct complexes: a TatABC complex, containing multiple copies of TatA, TatB and TatC subunits, and a separate TatA complex, containing only TatA subunits. Substrates initially bind to the TatABC complex, which probably triggers association of the separate TatA complex to form the active translocon.

It localises to the cell inner membrane. Functionally, part of the twin-arginine translocation (Tat) system that transports large folded proteins containing a characteristic twin-arginine motif in their signal peptide across membranes. TatA could form the protein-conducting channel of the Tat system. The protein is Sec-independent protein translocase protein TatA of Sulfurimonas denitrificans (strain ATCC 33889 / DSM 1251) (Thiomicrospira denitrificans (strain ATCC 33889 / DSM 1251)).